A 233-amino-acid polypeptide reads, in one-letter code: Short chain dehydrogenase trt9 (233 aa).

NADP(+) is bound by residues D33, R95, Y127, K131, and V160. The Proton donor role is filled by Y127. The active-site Lowers pKa of active site Tyr is K131.

It belongs to the short-chain dehydrogenases/reductases (SDR) family.

It functions in the pathway secondary metabolite biosynthesis; terpenoid biosynthesis. Functionally, short chain dehydrogenase; part of the gene cluster that mediates the biosynthesis of terretonin, a fungal meroterpenoid that acts as a mycotoxin. The first step of the pathway is the synthesis of 3,5-dimethylorsellinic acid (DMOA) by the polyketide synthase trt4. DMOA is then prenylated into farnesyl-DMOA by the polyprenyl transferase trt2. Methylation by the methyltransferase trt5 then leads to farnesyl-DMOA methyl ester which is further subject to epoxidation by the FAD-dependent monooxygenase trt8 to yield epoxyfarnesyl-DMOA methyl ester. Cyclization of epoxyfarnesyl-DMOA methyl ester by the terpene cyclase trt1 leads to a tetracycle intermediate which is in turn converted to preterretonin. Dehydrogenase trt9 comes next to transform preterretonin to preterrenoid. The FAD-dependent monooxygenase trt3 is then required for the C-hydroxylation at C16 of preterrenoid to yield terrenoid. The cytochrome P450 trt6 catalyzes three successive oxidations to transform terrenoid into an unstable intermediate, which then undergoes the D-ring expansion and unusual rearrangement of the methoxy group to afford the core skeleton of terretonin. Trt14 catalyzes the D-ring expansion of terretonin involving intramolecular methoxy rearrangement as well as the hydrolysis of the expanded D-ring and the methyl ester moiety. Finally, the nonheme iron-dependent dioxygenase trt7 accomplishes the last two oxidation reactions steps to complete the biosynthesis of terretonin. Terretonin C is produced via spontaneous decarboxylation of the terretonin precursor. Another shunt product of the terretonin biosynthesis is dihydrofarnesyl-DMOA, derived from epoxyfarnesyl-DMOA through hydrolysis of the epoxide. The sequence is that of Short chain dehydrogenase trt9 from Aspergillus terreus (strain NIH 2624 / FGSC A1156).